We begin with the raw amino-acid sequence, 445 residues long: DNA repair protein RadA (445 aa).

Residues 10 to 27 form a C4-type zinc finger; the sequence is CSNCANISHKWSGQCFDC. 90-97 contacts ATP; sequence GEPGIGKS. A RadA KNRFG motif motif is present at residues 249–253; the sequence is KNRFG. Positions 348-445 are lon-protease-like; it reads EIYLSIAGGL…HLQDLKEIIK (98 aa).

Belongs to the RecA family. RadA subfamily.

Its function is as follows. DNA-dependent ATPase involved in processing of recombination intermediates, plays a role in repairing DNA breaks. Stimulates the branch migration of RecA-mediated strand transfer reactions, allowing the 3' invading strand to extend heteroduplex DNA faster. Binds ssDNA in the presence of ADP but not other nucleotides, has ATPase activity that is stimulated by ssDNA and various branched DNA structures, but inhibited by SSB. Does not have RecA's homology-searching function. The protein is DNA repair protein RadA of Rickettsia typhi (strain ATCC VR-144 / Wilmington).